Consider the following 448-residue polypeptide: Glutamyl-tRNA reductase (448 aa).

Residues threonine 49 to arginine 52, serine 109, glutamate 114 to glutamine 116, and glutamine 120 each bind substrate. Cysteine 50 acts as the Nucleophile in catalysis. Residue glycine 189 to serine 194 participates in NADP(+) binding.

The protein belongs to the glutamyl-tRNA reductase family. In terms of assembly, homodimer.

It catalyses the reaction (S)-4-amino-5-oxopentanoate + tRNA(Glu) + NADP(+) = L-glutamyl-tRNA(Glu) + NADPH + H(+). It functions in the pathway porphyrin-containing compound metabolism; protoporphyrin-IX biosynthesis; 5-aminolevulinate from L-glutamyl-tRNA(Glu): step 1/2. Its function is as follows. Catalyzes the NADPH-dependent reduction of glutamyl-tRNA(Glu) to glutamate 1-semialdehyde (GSA). The sequence is that of Glutamyl-tRNA reductase from Staphylococcus haemolyticus (strain JCSC1435).